We begin with the raw amino-acid sequence, 173 residues long: Rubredoxin-2 (173 aa).

2 Rubredoxin-like domains span residues 2–53 (ASYK…FMLI) and 119–170 (YLKW…YVLY). Residues Cys6, Cys9, Cys39, Cys42, Cys124, Cys127, Cys157, and Cys160 each coordinate Fe cation.

Belongs to the rubredoxin family. Fe(3+) is required as a cofactor.

It is found in the cytoplasm. It functions in the pathway hydrocarbon metabolism; alkane degradation. Functionally, involved in the hydrocarbon hydroxylating system, which transfers electrons from NADH to rubredoxin reductase and then through rubredoxin to alkane 1 monooxygenase. The protein is Rubredoxin-2 (alkG) of Ectopseudomonas oleovorans (Pseudomonas oleovorans).